We begin with the raw amino-acid sequence, 189 residues long: GTPase HRas (189 aa).

Met-1 bears the N-acetylmethionine mark. At Thr-2 the chain carries N-acetylthreonine; in GTPase HRas, N-terminally processed. Position 10–17 (10–17 (GAGGVGKS)) interacts with GTP. Residues 32-40 (YDPTIEDSY) carry the Effector region motif. GTP contacts are provided by residues 57–61 (DTAGQ) and 116–119 (NKCD). Position 118 is an S-nitrosocysteine (Cys-118). Positions 166–185 (HKLRKLNPPDESGPGCMNCK) are hypervariable region. Residues Cys-181 and Cys-184 are each lipidated (S-palmitoyl cysteine). Cys-186 carries the cysteine methyl ester modification. A lipid anchor (S-farnesyl cysteine) is attached at Cys-186. Positions 187 to 189 (VIS) are cleaved as a propeptide — removed in mature form.

The protein belongs to the small GTPase superfamily. Ras family. Post-translationally, palmitoylated by the ZDHHC9-GOLGA7 complex. A continuous cycle of de- and re-palmitoylation regulates rapid exchange between plasma membrane and Golgi.

Its subcellular location is the cell membrane. It is found in the golgi apparatus membrane. The enzyme catalyses GTP + H2O = GDP + phosphate + H(+). With respect to regulation, alternates between an inactive form bound to GDP and an active form bound to GTP. Activated by a guanine nucleotide-exchange factor (GEF) and inactivated by a GTPase-activating protein (GAP). Ras proteins bind GDP/GTP and possess intrinsic GTPase activity. The chain is GTPase HRas (HRAS) from Gallus gallus (Chicken).